The chain runs to 158 residues: Small ribosomal subunit protein uS7 (158 aa).

The protein belongs to the universal ribosomal protein uS7 family. As to quaternary structure, part of the 30S ribosomal subunit. Contacts proteins S9 and S11.

Its function is as follows. One of the primary rRNA binding proteins, it binds directly to 16S rRNA where it nucleates assembly of the head domain of the 30S subunit. Is located at the subunit interface close to the decoding center, probably blocks exit of the E-site tRNA. The polypeptide is Small ribosomal subunit protein uS7 (Parabacteroides distasonis (strain ATCC 8503 / DSM 20701 / CIP 104284 / JCM 5825 / NCTC 11152)).